The following is a 104-amino-acid chain: Replication restart protein PriB (104 aa).

Residues 1-101 (MTNRLVLSGT…LHAEQIDLID (101 aa)) form the SSB domain.

The protein belongs to the PriB family. In terms of assembly, homodimer. Interacts with PriA and DnaT. Component of the replication restart primosome. Primosome assembly occurs via a 'hand-off' mechanism. PriA binds to replication forks, subsequently PriB then DnaT bind; DnaT then displaces ssDNA to generate the helicase loading substrate.

Involved in the restart of stalled replication forks, which reloads the replicative helicase on sites other than the origin of replication; the PriA-PriB pathway is the major replication restart pathway. During primosome assembly it facilitates complex formation between PriA and DnaT on DNA; stabilizes PriA on DNA. Stimulates the DNA unwinding activity of PriA helicase. The sequence is that of Replication restart protein PriB from Enterobacter sp. (strain 638).